We begin with the raw amino-acid sequence, 252 residues long: 2-C-methyl-D-erythritol 4-phosphate cytidylyltransferase (252 aa).

This sequence belongs to the IspD/TarI cytidylyltransferase family. IspD subfamily.

It catalyses the reaction 2-C-methyl-D-erythritol 4-phosphate + CTP + H(+) = 4-CDP-2-C-methyl-D-erythritol + diphosphate. The protein operates within isoprenoid biosynthesis; isopentenyl diphosphate biosynthesis via DXP pathway; isopentenyl diphosphate from 1-deoxy-D-xylulose 5-phosphate: step 2/6. Functionally, catalyzes the formation of 4-diphosphocytidyl-2-C-methyl-D-erythritol from CTP and 2-C-methyl-D-erythritol 4-phosphate (MEP). In Chlorobium phaeobacteroides (strain BS1), this protein is 2-C-methyl-D-erythritol 4-phosphate cytidylyltransferase.